A 308-amino-acid chain; its full sequence is Snake venom metalloprotease inhibitor 02D01 (308 aa).

The signal sequence occupies residues 1–23; the sequence is MFVSRLAASGLLLLSLLALSLDG. Residues 24–38 constitute a propeptide that is removed on maturation; it reads KPLPQRQPHHIQPME. Glutamine 39 is modified (pyrrolidone carboxylic acid). Residues 42–50 constitute a propeptide that is removed on maturation; the sequence is LAPDAPPLE. Glutamine 51 is modified (pyrrolidone carboxylic acid). Residues 54–62 constitute a propeptide that is removed on maturation; the sequence is LAPDAPPLE. Glutamine 63 bears the Pyrrolidone carboxylic acid mark. Positions 66 to 74 are excised as a propeptide; that stretch reads LAPAAPPLE. The residue at position 75 (glutamine 75) is a Pyrrolidone carboxylic acid. Residues 78-86 constitute a propeptide that is removed on maturation; it reads LAPDAPPME. Glutamine 87 is modified (pyrrolidone carboxylic acid). A propeptide spanning residues 90 to 98 is cleaved from the precursor; it reads LAPDAPPME. Glutamine 99 is modified (pyrrolidone carboxylic acid). Residues 102 to 110 constitute a propeptide that is removed on maturation; that stretch reads LAPDAPPME. Glutamine 111 is modified (pyrrolidone carboxylic acid). Positions 114–122 are excised as a propeptide; the sequence is LAPDAPPME. Residue glutamine 123 is modified to Pyrrolidone carboxylic acid. Positions 126–134 are excised as a propeptide; it reads LAPDAAPLE. Glutamine 135 is subject to Pyrrolidone carboxylic acid. Residues 138-146 constitute a propeptide that is removed on maturation; sequence LAPDAPPME. Pyrrolidone carboxylic acid is present on glutamine 147. A propeptide spanning residues 150–158 is cleaved from the precursor; that stretch reads LAPDAPPME. Position 159 is a pyrrolidone carboxylic acid (glutamine 159). The propeptide occupies 162-249; the sequence is QPQIPSLMEQ…KQASQKWGRL (88 aa). Residues 172–182 show a composition bias toward polar residues; the sequence is RQLSSGGTTAL. Disordered regions lie at residues 172–228 and 252–279; these read RQLS…AAAT and HDHD…GARR. Positions 198–209 are enriched in gly residues; sequence VVGGGGGGGGGS. Low complexity predominate over residues 210–227; it reads KAALALPKPPKAKGAAAA. Positions 265-277 are enriched in gly residues; it reads SVGGGGGGGGGGA. The propeptide occupies 278–286; sequence RRLKGLAKK. An intrachain disulfide couples cysteine 292 to cysteine 308.

The protein in the C-terminal section; belongs to the natriuretic peptide family. In the central section; belongs to the pHpG family. Expressed by the venom gland.

Its subcellular location is the secreted. Its function is as follows. pEKW and poly-His-poly-Gly peptides may serve as metalloproteinase inhibitors during glandular storage. Their inhibition may be instantly disengaged, by dilution or physiochemical change, when venom is injected into tissue of the prey. Functionally, has a vasorelaxant activity in rat aortic strips and a diuretic potency in anesthetized rats. May act by activating natriuretic receptors (NPR1 and/or NPR2). This is Snake venom metalloprotease inhibitor 02D01 from Echis ocellatus (Ocellated saw-scaled viper).